The following is a 178-amino-acid chain: Translation initiation factor IF-3 (178 aa).

It belongs to the IF-3 family. As to quaternary structure, monomer.

The protein resides in the cytoplasm. Its function is as follows. IF-3 binds to the 30S ribosomal subunit and shifts the equilibrium between 70S ribosomes and their 50S and 30S subunits in favor of the free subunits, thus enhancing the availability of 30S subunits on which protein synthesis initiation begins. In Ureaplasma parvum serovar 3 (strain ATCC 700970), this protein is Translation initiation factor IF-3.